The primary structure comprises 383 residues: Dual-specificity RNA methyltransferase RlmN (383 aa).

Residue glutamate 93 is the Proton acceptor of the active site. In terms of domain architecture, Radical SAM core spans 99 to 339; sequence EETRGTLCVS…TTIRKTRGDD (241 aa). Cysteines 106 and 344 form a disulfide. Positions 113, 117, and 120 each coordinate [4Fe-4S] cluster. Residues 170–171, serine 202, 224–226, and asparagine 301 each bind S-adenosyl-L-methionine; these read GE and SLH. Cysteine 344 serves as the catalytic S-methylcysteine intermediate.

This sequence belongs to the radical SAM superfamily. RlmN family. It depends on [4Fe-4S] cluster as a cofactor.

The protein localises to the cytoplasm. The catalysed reaction is adenosine(2503) in 23S rRNA + 2 reduced [2Fe-2S]-[ferredoxin] + 2 S-adenosyl-L-methionine = 2-methyladenosine(2503) in 23S rRNA + 5'-deoxyadenosine + L-methionine + 2 oxidized [2Fe-2S]-[ferredoxin] + S-adenosyl-L-homocysteine. The enzyme catalyses adenosine(37) in tRNA + 2 reduced [2Fe-2S]-[ferredoxin] + 2 S-adenosyl-L-methionine = 2-methyladenosine(37) in tRNA + 5'-deoxyadenosine + L-methionine + 2 oxidized [2Fe-2S]-[ferredoxin] + S-adenosyl-L-homocysteine. Specifically methylates position 2 of adenine 2503 in 23S rRNA and position 2 of adenine 37 in tRNAs. m2A2503 modification seems to play a crucial role in the proofreading step occurring at the peptidyl transferase center and thus would serve to optimize ribosomal fidelity. The sequence is that of Dual-specificity RNA methyltransferase RlmN from Ralstonia nicotianae (strain ATCC BAA-1114 / GMI1000) (Ralstonia solanacearum).